The chain runs to 434 residues: Neuropeptide receptor 22 (434 aa).

Residues 1-55 (MDEGGGIGSSLLSRITTTASEIMMRNEPTTTENPAVQEMNHIYHLTPSMKMLCIL) lie on the Extracellular side of the membrane. A helical membrane pass occupies residues 56-76 (FYSILCVCCVYGNVLVILVIV). The Cytoplasmic segment spans residues 77–86 (YFKRLRTATN). A helical membrane pass occupies residues 87–107 (ILILNLAVADLLISVFCIPFS). Over 108–128 (YWQVLIYDDQRWLFGSMMCSL) the chain is Extracellular. Cysteine 126 and cysteine 204 are oxidised to a cystine. The chain crosses the membrane as a helical span at residues 129–149 (LAFLQAMAVFLSAWTLVVISF). The Cytoplasmic segment spans residues 150 to 169 (DRWMAIMFLLTPNIRITRRR). The chain crosses the membrane as a helical span at residues 170-190 (ALYLVAATWIFSILMALPLLF). Topologically, residues 191–226 (TTRFFEDQDGLPNCGENWTYFGDSGEQVRKVYSSMV) are extracellular. Residue asparagine 207 is glycosylated (N-linked (GlcNAc...) asparagine). The chain crosses the membrane as a helical span at residues 227–247 (LILQYVVPQAVLIITYTHIGI). Over 248-277 (KMWNSRVPGMQNGATKKMIVDRHESVKKLV) the chain is Cytoplasmic. A helical membrane pass occupies residues 278–298 (PMVILISALFALCWLPLLILI). The Extracellular portion of the chain corresponds to 299–310 (NVIPEFYPDINS). The chain crosses the membrane as a helical span at residues 311 to 331 (WGYILYLWWFAHGLAMSHSMV). The Cytoplasmic portion of the chain corresponds to 332-434 (NPIIYFIRNA…VRNNSANSLA (103 aa)).

This sequence belongs to the G-protein coupled receptor 1 family. In terms of tissue distribution, expressed in many cells, mainly in the head region, with expression detected in the head muscles, I2 neurons, MC neurons, RIH neuron, AIA neurons, AUA neurons, ASK neurons, ASI neurons, a few B-type motorneurons in the posterior ventral nerve cord, pharyngeal muscles, body wall muscles, the intestine and a few classes of unidentified cells anterior to the nerve ring. Expression in the MC neurons is important to mediate suppression of feeding while expression in the RIH neuron is important for the facilitation of egg-laying. No expression detected in other tissues including hypodermis.

The protein resides in the cell membrane. Receptor for the LURY-1-1 and LURY-1-2 peptides which control food-related processes including feeding, lifespan, egg-laying and roaming behavior. Receptor for flp-7 which stimulates serotonin-induced fat loss. Serotonin induces secretion of flp-7 from neurons and binding to npr-22 which leads to induction of the atgp-1 lipase and subsequent fat loss. Acts in vitro as a receptor for the flp-7 FMRFamide-like neuropeptides TPMQRSSMVRF-amide, SPMQRSSMVRF-amide, SPMERSAMVRF-amide and SPMDRSKMVRF-amide. Also acts in vitro as a receptor for a number of other FMRFamide-like neuropeptides including the flp-1 neuropeptide PNFMRY-amide, the flp-9 neuropeptide KPSFVRF-amide, the flp-11 neuropeptides AMRNALVRF-amide, ASGGMRNALVRF-amide and NGAPQPFVRF-amide, the flp-13 neuropeptides AADGAPLIRF-amide, ASPSAPLIRF-amide, SPSAVPLIRF-amide, SAAAPLIRF-amide and ASSAPLIRF-amide, and the flp-22 neuropeptide SPSAKWMRF-amide. The SPMERSAMVRF-amide neuropeptide from flp-7 acts as the strongest in vitro activator of npr-22. In Caenorhabditis elegans, this protein is Neuropeptide receptor 22.